Reading from the N-terminus, the 137-residue chain is Ribosome-binding factor A (137 aa).

Positions 112–137 (KKDEVKEDESHEDESTDHTEETNEEP) are disordered. A compositionally biased stretch (basic and acidic residues) spans 127-137 (TDHTEETNEEP).

It belongs to the RbfA family. Monomer. Binds 30S ribosomal subunits, but not 50S ribosomal subunits or 70S ribosomes.

The protein resides in the cytoplasm. One of several proteins that assist in the late maturation steps of the functional core of the 30S ribosomal subunit. Associates with free 30S ribosomal subunits (but not with 30S subunits that are part of 70S ribosomes or polysomes). Required for efficient processing of 16S rRNA. May interact with the 5'-terminal helix region of 16S rRNA. The chain is Ribosome-binding factor A from Coprothermobacter proteolyticus (strain ATCC 35245 / DSM 5265 / OCM 4 / BT).